A 582-amino-acid polypeptide reads, in one-letter code: Myoneurin (582 aa).

Residues Cys-24 to Ser-89 enclose the BTB domain. The tract at residues Gln-169 to Val-197 is disordered. Short sequence motifs (nuclear localization signal) lie at residues Lys-174–Lys-190 and Lys-257–Lys-262. A compositionally biased stretch (polar residues) spans Ser-188 to Val-197. Ser-289 is modified (phosphoserine). The segment at Pro-302–His-324 adopts a C2H2-type 1; degenerate zinc-finger fold. 6 C2H2-type zinc fingers span residues Tyr-330–His-352, Tyr-358–His-381, Tyr-387–His-409, Tyr-415–His-437, Tyr-443–His-465, and Phe-471–His-494. Residues His-489–Leu-538 form a disordered region. The span at Ser-495–Ser-511 shows a compositional bias: basic and acidic residues. The segment covering Glu-512–Ser-522 has biased composition (polar residues).

Belongs to the krueppel C2H2-type zinc-finger protein family.

Its subcellular location is the nucleus. The protein is Myoneurin (MYNN) of Pongo abelii (Sumatran orangutan).